The chain runs to 318 residues: Putative enoyl-CoA hydratase EchA13 (318 aa).

A disordered region spans residues 90-110; it reads LGSADDIRERSPGPDQHPSYR.

This sequence belongs to the enoyl-CoA hydratase/isomerase family.

The polypeptide is Putative enoyl-CoA hydratase EchA13 (echA13) (Mycobacterium tuberculosis (strain ATCC 25618 / H37Rv)).